We begin with the raw amino-acid sequence, 374 residues long: UDP-N-acetylglucosamine--N-acetylmuramyl-(pentapeptide) pyrophosphoryl-undecaprenol N-acetylglucosamine transferase (374 aa).

UDP-N-acetyl-alpha-D-glucosamine contacts are provided by residues 13 to 15 (TGG), N124, R165, S193, and Q294.

Belongs to the glycosyltransferase 28 family. MurG subfamily.

Its subcellular location is the cell inner membrane. It carries out the reaction di-trans,octa-cis-undecaprenyl diphospho-N-acetyl-alpha-D-muramoyl-L-alanyl-D-glutamyl-meso-2,6-diaminopimeloyl-D-alanyl-D-alanine + UDP-N-acetyl-alpha-D-glucosamine = di-trans,octa-cis-undecaprenyl diphospho-[N-acetyl-alpha-D-glucosaminyl-(1-&gt;4)]-N-acetyl-alpha-D-muramoyl-L-alanyl-D-glutamyl-meso-2,6-diaminopimeloyl-D-alanyl-D-alanine + UDP + H(+). It functions in the pathway cell wall biogenesis; peptidoglycan biosynthesis. Cell wall formation. Catalyzes the transfer of a GlcNAc subunit on undecaprenyl-pyrophosphoryl-MurNAc-pentapeptide (lipid intermediate I) to form undecaprenyl-pyrophosphoryl-MurNAc-(pentapeptide)GlcNAc (lipid intermediate II). The chain is UDP-N-acetylglucosamine--N-acetylmuramyl-(pentapeptide) pyrophosphoryl-undecaprenol N-acetylglucosamine transferase from Sinorhizobium medicae (strain WSM419) (Ensifer medicae).